The chain runs to 300 residues: Glucose and ribitol dehydrogenase homolog (300 aa).

Over residues 1–14 (MASQQFPPQNQETQ) the composition is skewed to polar residues. The tract at residues 1-23 (MASQQFPPQNQETQPGKEHAMDP) is disordered. 44–68 (IVTGGDSGIGRAVCLCFALEGATVA) provides a ligand contact to NAD(+). A substrate-binding site is contributed by Ser192. The Proton acceptor role is filled by Tyr205.

This sequence belongs to the short-chain dehydrogenases/reductases (SDR) family.

Its function is as follows. May act as a short alcohol-polyol-sugar dehydrogenase possibly related to carbohydrate metabolism and the acquisition of desiccation tolerance. May also be involved in signal transduction. In Oryza sativa subsp. japonica (Rice), this protein is Glucose and ribitol dehydrogenase homolog.